The chain runs to 559 residues: U-box domain-containing protein 41 (559 aa).

Disordered stretches follow at residues 1-30 (MGGNKQRWFSFHQRSSSATTTTLPQHKHDE) and 121-156 (RMDKDPNPSPGQSPGPGDKDPEPEILPPVEENSPSD). The segment covering 12 to 24 (HQRSSSATTTTLP) has biased composition (polar residues). Residues 30–104 (ETPPEFLCPI…FSWCDRQKVD (75 aa)) form the U-box domain. 5 ARM repeats span residues 266-305 (EDLRVSLCTDRILSFLRSLLVSRYNLVQTNAAASVVNLSL), 307-346 (KQNKVKIVRSGFVPLLIDVLKSGTTEAQEHVAGALFSLAL), 348-388 (DENK…HLSL), 390-427 (PSNRTRLVRAGAVPTLLSMVRSGDSTSRILLVLCNLAA), and 428-472 (CPDG…TLCQ).

The enzyme catalyses S-ubiquitinyl-[E2 ubiquitin-conjugating enzyme]-L-cysteine + [acceptor protein]-L-lysine = [E2 ubiquitin-conjugating enzyme]-L-cysteine + N(6)-ubiquitinyl-[acceptor protein]-L-lysine.. Its pathway is protein modification; protein ubiquitination. Its function is as follows. Functions as an E3 ubiquitin ligase. The protein is U-box domain-containing protein 41 (PUB41) of Arabidopsis thaliana (Mouse-ear cress).